The following is a 126-amino-acid chain: Large ribosomal subunit protein bL17 (126 aa).

This sequence belongs to the bacterial ribosomal protein bL17 family. Part of the 50S ribosomal subunit. Contacts protein L32.

The protein is Large ribosomal subunit protein bL17 of Xylella fastidiosa (strain 9a5c).